The primary structure comprises 437 residues: Photosystem II stability/assembly factor HCF136, chloroplastic (437 aa).

Belongs to the Ycf48 family.

It localises to the plastid. It is found in the chloroplast thylakoid membrane. Its function is as follows. Essential for photosystem II (PSII) biogenesis; required for assembly of an early intermediate in PSII assembly that includes D2 (psbD) and cytochrome b559. This Cyanidioschyzon merolae (strain NIES-3377 / 10D) (Unicellular red alga) protein is Photosystem II stability/assembly factor HCF136, chloroplastic.